The primary structure comprises 226 residues: Cytidylate kinase (226 aa).

10–18 lines the ATP pocket; that stretch reads GPASSGKST.

Belongs to the cytidylate kinase family. Type 1 subfamily.

The protein resides in the cytoplasm. The catalysed reaction is CMP + ATP = CDP + ADP. The enzyme catalyses dCMP + ATP = dCDP + ADP. The chain is Cytidylate kinase from Streptococcus equi subsp. zooepidemicus (strain MGCS10565).